The sequence spans 478 residues: Putative multidrug resistance outer membrane protein MdtQ (478 aa).

Residues 1–21 (MNRDSFYPAIACFPLLLMLAG) form the signal peptide. Cys22 carries the N-palmitoyl cysteine lipid modification. The S-diacylglycerol cysteine moiety is linked to residue Cys22.

Belongs to the outer membrane factor (OMF) (TC 1.B.17) family.

The protein localises to the cell outer membrane. In terms of biological role, could be involved in resistance to puromycin, acriflavine and tetraphenylarsonium chloride. The polypeptide is Putative multidrug resistance outer membrane protein MdtQ (mdtQ) (Shigella flexneri).